We begin with the raw amino-acid sequence, 287 residues long: 4-hydroxybenzoate octaprenyltransferase (287 aa).

The next 6 membrane-spanning stretches (helical) occupy residues 41–61 (LPLL…GCAI), 92–112 (VALA…LNAL), 133–153 (FFAI…PMAF), 160–180 (VPML…AYDT), 218–238 (LGIY…WLGW), and 267–287 (NNWL…ATWF).

It belongs to the UbiA prenyltransferase family. The cofactor is Mg(2+).

The protein resides in the cell inner membrane. It catalyses the reaction all-trans-octaprenyl diphosphate + 4-hydroxybenzoate = 4-hydroxy-3-(all-trans-octaprenyl)benzoate + diphosphate. Its pathway is cofactor biosynthesis; ubiquinone biosynthesis. In terms of biological role, catalyzes the prenylation of para-hydroxybenzoate (PHB) with an all-trans polyprenyl group. Mediates the second step in the final reaction sequence of ubiquinone-8 (UQ-8) biosynthesis, which is the condensation of the polyisoprenoid side chain with PHB, generating the first membrane-bound Q intermediate 3-octaprenyl-4-hydroxybenzoate. This chain is 4-hydroxybenzoate octaprenyltransferase, found in Paraburkholderia xenovorans (strain LB400).